The primary structure comprises 370 residues: Probable butyrate kinase (370 aa).

This sequence belongs to the acetokinase family.

The protein localises to the cytoplasm. It carries out the reaction butanoate + ATP = butanoyl phosphate + ADP. The protein is Probable butyrate kinase of Elusimicrobium minutum (strain Pei191).